Reading from the N-terminus, the 247-residue chain is Triosephosphate isomerase (247 aa).

9–11 (NWK) is a binding site for substrate. The active-site Electrophile is H94. E166 (proton acceptor) is an active-site residue. Residues G172, S211, and 232–233 (GG) each bind substrate.

This sequence belongs to the triosephosphate isomerase family. Homodimer.

It localises to the cytoplasm. The catalysed reaction is D-glyceraldehyde 3-phosphate = dihydroxyacetone phosphate. It participates in carbohydrate biosynthesis; gluconeogenesis. Its pathway is carbohydrate degradation; glycolysis; D-glyceraldehyde 3-phosphate from glycerone phosphate: step 1/1. Functionally, involved in the gluconeogenesis. Catalyzes stereospecifically the conversion of dihydroxyacetone phosphate (DHAP) to D-glyceraldehyde-3-phosphate (G3P). The chain is Triosephosphate isomerase from Cupriavidus taiwanensis (strain DSM 17343 / BCRC 17206 / CCUG 44338 / CIP 107171 / LMG 19424 / R1) (Ralstonia taiwanensis (strain LMG 19424)).